We begin with the raw amino-acid sequence, 384 residues long: Probable UDP-galactopyranose mutase (384 aa).

The first 19 residues, 1-19 (MNNKNIMIVGAGFSGVVIA), serve as a signal peptide directing secretion. Residues Ser14, 33–34 (DR), Asn41, and 60–61 (HI) each bind FAD. UDP-alpha-D-galactose is bound by residues Asn84, Phe151, Thr156, Trp160, and Tyr185. FAD is bound at residue Phe219. UDP-alpha-D-galactose is bound by residues Asn270, Arg280, and Tyr314. Arg343 contributes to the FAD binding site. Tyr349 lines the UDP-alpha-D-galactose pocket. 350-355 (LDMDVT) is a binding site for FAD.

Belongs to the UDP-galactopyranose/dTDP-fucopyranose mutase family. In terms of assembly, homodimer. It depends on FAD as a cofactor.

The enzyme catalyses UDP-alpha-D-galactose = UDP-alpha-D-galactofuranose. It functions in the pathway bacterial outer membrane biogenesis; LPS O-antigen biosynthesis. Functionally, catalyzes the interconversion through a 2-keto intermediate of uridine diphosphogalactopyranose (UDP-GalP) into uridine diphosphogalactofuranose (UDP-GalF). In Klebsiella pneumoniae, this protein is Probable UDP-galactopyranose mutase (rfbD).